A 200-amino-acid chain; its full sequence is NAD(P)H dehydrogenase (quinone) (200 aa).

A Flavodoxin-like domain is found at 4–191 (VLVLYYSSYG…GGARYQGALV (188 aa)). Residues 10–15 (SSYGHI) and 79–81 (TRF) each bind FMN. Tyrosine 12 is an NAD(+) binding site. Tryptophan 99 provides a ligand contact to substrate. FMN is bound by residues 114–120 (STASQHG) and histidine 135.

The protein belongs to the WrbA family. It depends on FMN as a cofactor.

The catalysed reaction is a quinone + NADH + H(+) = a quinol + NAD(+). It catalyses the reaction a quinone + NADPH + H(+) = a quinol + NADP(+). The protein is NAD(P)H dehydrogenase (quinone) of Rhodospirillum centenum (strain ATCC 51521 / SW).